An 856-amino-acid polypeptide reads, in one-letter code: TPR repeat-containing protein TP_0123 (856 aa).

3 TPR repeats span residues 107–140, 523–556, and 603–636; these read YAAV…VADD, YRTF…AEQL, and TVSL…ALQY.

This is TPR repeat-containing protein TP_0123 from Treponema pallidum (strain Nichols).